The primary structure comprises 474 residues: Bifunctional protein HldE (474 aa).

Positions 1 to 318 are ribokinase; it reads MKLSMPRFDQ…RAVQREQGSE (318 aa). 194 to 197 lines the ATP pocket; that stretch reads NLSE. The active site involves Asp-263. Residues 343–474 form a cytidylyltransferase region; it reads FTNGCFDILH…AIVEKIRQKG (132 aa).

The protein in the N-terminal section; belongs to the carbohydrate kinase PfkB family. This sequence in the C-terminal section; belongs to the cytidylyltransferase family. As to quaternary structure, homodimer.

It catalyses the reaction D-glycero-beta-D-manno-heptose 7-phosphate + ATP = D-glycero-beta-D-manno-heptose 1,7-bisphosphate + ADP + H(+). It carries out the reaction D-glycero-beta-D-manno-heptose 1-phosphate + ATP + H(+) = ADP-D-glycero-beta-D-manno-heptose + diphosphate. It functions in the pathway nucleotide-sugar biosynthesis; ADP-L-glycero-beta-D-manno-heptose biosynthesis; ADP-L-glycero-beta-D-manno-heptose from D-glycero-beta-D-manno-heptose 7-phosphate: step 1/4. The protein operates within nucleotide-sugar biosynthesis; ADP-L-glycero-beta-D-manno-heptose biosynthesis; ADP-L-glycero-beta-D-manno-heptose from D-glycero-beta-D-manno-heptose 7-phosphate: step 3/4. Its pathway is bacterial outer membrane biogenesis; LPS core biosynthesis. Catalyzes the phosphorylation of D-glycero-D-manno-heptose 7-phosphate at the C-1 position to selectively form D-glycero-beta-D-manno-heptose-1,7-bisphosphate. Functionally, catalyzes the ADP transfer from ATP to D-glycero-beta-D-manno-heptose 1-phosphate, yielding ADP-D-glycero-beta-D-manno-heptose. The chain is Bifunctional protein HldE from Pseudomonas aeruginosa (strain ATCC 15692 / DSM 22644 / CIP 104116 / JCM 14847 / LMG 12228 / 1C / PRS 101 / PAO1).